The chain runs to 495 residues: ATP synthase subunit beta, chloroplastic (495 aa).

An ATP-binding site is contributed by 172–179 (GGAGVGKT).

Belongs to the ATPase alpha/beta chains family. In terms of assembly, F-type ATPases have 2 components, CF(1) - the catalytic core - and CF(0) - the membrane proton channel. CF(1) has five subunits: alpha(3), beta(3), gamma(1), delta(1), epsilon(1). CF(0) has four main subunits: a(1), b(1), b'(1) and c(9-12).

The protein resides in the plastid. Its subcellular location is the chloroplast thylakoid membrane. The enzyme catalyses ATP + H2O + 4 H(+)(in) = ADP + phosphate + 5 H(+)(out). In terms of biological role, produces ATP from ADP in the presence of a proton gradient across the membrane. The catalytic sites are hosted primarily by the beta subunits. The sequence is that of ATP synthase subunit beta, chloroplastic from Convallaria majalis (Lily of the valley).